The chain runs to 868 residues: DNA topoisomerase 1 (868 aa).

The Toprim domain maps to 3-148; it reads KSLVIVESPA…RFSRVVFNEI (146 aa). 2 residues coordinate Mg(2+): Glu9 and Asp117. The region spanning 164 to 581 is the Topo IA-type catalytic domain; that stretch reads NLDRVNAQQT…QFFKDFSQQL (418 aa). The interaction with DNA stretch occupies residues 198–203; that stretch reads SAGRVQ. The active-site O-(5'-phospho-DNA)-tyrosine intermediate is the Tyr325. 3 C4-type zinc fingers span residues 605 to 636, 667 to 694, and 716 to 739; these read CPTC…KERC, CPKC…NPNC, and CDKC…CTSC.

This sequence belongs to the type IA topoisomerase family. Monomer. It depends on Mg(2+) as a cofactor.

The enzyme catalyses ATP-independent breakage of single-stranded DNA, followed by passage and rejoining.. Releases the supercoiling and torsional tension of DNA, which is introduced during the DNA replication and transcription, by transiently cleaving and rejoining one strand of the DNA duplex. Introduces a single-strand break via transesterification at a target site in duplex DNA. The scissile phosphodiester is attacked by the catalytic tyrosine of the enzyme, resulting in the formation of a DNA-(5'-phosphotyrosyl)-enzyme intermediate and the expulsion of a 3'-OH DNA strand. The free DNA strand then undergoes passage around the unbroken strand, thus removing DNA supercoils. Finally, in the religation step, the DNA 3'-OH attacks the covalent intermediate to expel the active-site tyrosine and restore the DNA phosphodiester backbone. In Pasteurella multocida (strain Pm70), this protein is DNA topoisomerase 1.